The primary structure comprises 238 residues: MSEQDFREIARNGLWRNNPGLVQLLGLCPLLGTSNSTVNALGLGLATMLVLACSNAAVSLVRGAVSEAIRLPAFVMIIAALTTCIELLMQAWTYELYQVLGIFIPLITTNCVILGRAEAFAAKNGVLRASFDGLLMGLGFALVLLVLGGLRELLGQGTLLADMHLLFGPAAADWKIQPFPQYQGFLLAILPPGAFIMLGLLIALKNRIDESLAERAKVQAGDVPATQRQRVRVTGVIE.

5 helical membrane-spanning segments follow: residues leucine 41–valine 61, leucine 71–alanine 91, glutamate 95–glycine 115, serine 130–leucine 150, and glycine 184–leucine 204.

The protein belongs to the NqrDE/RnfAE family. The complex is composed of six subunits: RnfA, RnfB, RnfC, RnfD, RnfE and RnfG.

Its subcellular location is the cell inner membrane. Functionally, part of a membrane-bound complex that couples electron transfer with translocation of ions across the membrane. The chain is Ion-translocating oxidoreductase complex subunit E from Pseudomonas aeruginosa (strain UCBPP-PA14).